A 1342-amino-acid chain; its full sequence is DNA-directed RNA polymerase subunit beta (1342 aa).

Belongs to the RNA polymerase beta chain family. In terms of assembly, the RNAP catalytic core consists of 2 alpha, 1 beta, 1 beta' and 1 omega subunit. When a sigma factor is associated with the core the holoenzyme is formed, which can initiate transcription.

It catalyses the reaction RNA(n) + a ribonucleoside 5'-triphosphate = RNA(n+1) + diphosphate. Its function is as follows. DNA-dependent RNA polymerase catalyzes the transcription of DNA into RNA using the four ribonucleoside triphosphates as substrates. The sequence is that of DNA-directed RNA polymerase subunit beta from Yersinia pestis bv. Antiqua (strain Angola).